The primary structure comprises 405 residues: Argininosuccinate synthase (405 aa).

Residues 10-18 (AYSGGLDTS) and A37 each bind ATP. Residues Y88 and S93 each coordinate L-citrulline. Position 118 (G118) interacts with ATP. The L-aspartate site is built by T120, N124, and D125. N124 is a binding site for L-citrulline. The L-citrulline site is built by R128, S179, S188, E264, and Y276.

This sequence belongs to the argininosuccinate synthase family. Type 1 subfamily. Homotetramer.

Its subcellular location is the cytoplasm. It carries out the reaction L-citrulline + L-aspartate + ATP = 2-(N(omega)-L-arginino)succinate + AMP + diphosphate + H(+). It functions in the pathway amino-acid biosynthesis; L-arginine biosynthesis; L-arginine from L-ornithine and carbamoyl phosphate: step 2/3. This Pseudomonas entomophila (strain L48) protein is Argininosuccinate synthase.